The following is a 651-amino-acid chain: Probable endo-1,3(4)-beta-glucanase NFIA_089530 (651 aa).

The signal sequence occupies residues Met1 to Ala21. In terms of domain architecture, GH16 spans Glu36–Thr289. Residue Asn64 is glycosylated (N-linked (GlcNAc...) asparagine). Residue Glu145 is the Nucleophile of the active site. The Proton donor role is filled by Glu150. Residue Asn200 is glycosylated (N-linked (GlcNAc...) asparagine). Over residues Pro364 to Thr378 the composition is skewed to low complexity. Disordered stretches follow at residues Pro364–Ser422 and Ser508–Ala557. Composition is skewed to polar residues over residues Asn379–Pro400 and Gln520–Gly535. Low complexity predominate over residues Ser542–Ala557. Asn629 is lipidated: GPI-anchor amidated asparagine. Positions Gly630–Ala651 are cleaved as a propeptide — removed in mature form.

The protein belongs to the glycosyl hydrolase 16 family.

It is found in the cell membrane. It carries out the reaction Endohydrolysis of (1-&gt;3)- or (1-&gt;4)-linkages in beta-D-glucans when the glucose residue whose reducing group is involved in the linkage to be hydrolyzed is itself substituted at C-3.. Functionally, mixed-linked glucanase involved in the degradation of complex natural cellulosic substrates. The polypeptide is Probable endo-1,3(4)-beta-glucanase NFIA_089530 (Neosartorya fischeri (strain ATCC 1020 / DSM 3700 / CBS 544.65 / FGSC A1164 / JCM 1740 / NRRL 181 / WB 181) (Aspergillus fischerianus)).